A 414-amino-acid chain; its full sequence is MNPSVPKVMKRENNTHLLVSKEMNDTSLQLPSTTRSLSPKESNSNEDFNVDGNETTLQRISKDYLKPNIGLVLLTVSYFFNSAMVVSTKVLENDPDDIANDRQIKPLQILLVRMVITYIGTLIYMYINKSTISDVPFGKPEVRKWLVLRGCTGFFGVFGMYYSLMYLTISDAVLITFLAPSLTIFLSWVILRERFTKVEALGSLISLLGVVLIVRPSFLFGTPELTDSSSQIVESSDPKSRLIATLVGLWGVLGMSCVYIIIRYIGKRAHAIMSVSYFSLITAIVSFIGINTIPSMKFQIPHSKKQWILFGNLGVSGFIFQLLLTMGIQRERAGRGSLMTYTQLLYAVFWDVALYKHWPNIWSWIGMIIIISATLWVIRIRAANNETTAKDLTPIIDDEENSIPLTEFDLSDSK.

Topologically, residues 1 to 66 are lumenal; it reads MNPSVPKVMK…LQRISKDYLK (66 aa). A disordered region spans residues 20 to 51; sequence SKEMNDTSLQLPSTTRSLSPKESNSNEDFNVD. Over residues 25–51 the composition is skewed to polar residues; sequence DTSLQLPSTTRSLSPKESNSNEDFNVD. Lys40 is covalently cross-linked (Glycyl lysine isopeptide (Lys-Gly) (interchain with G-Cter in ubiquitin)). The chain crosses the membrane as a helical span at residues 67 to 87; that stretch reads PNIGLVLLTVSYFFNSAMVVS. Positions 78 to 215 constitute an EamA 1 domain; that stretch reads YFFNSAMVVS…SLLGVVLIVR (138 aa). The Cytoplasmic segment spans residues 88-106; that stretch reads TKVLENDPDDIANDRQIKP. A helical transmembrane segment spans residues 107-127; sequence LQILLVRMVITYIGTLIYMYI. At 128–144 the chain is on the lumenal side; that stretch reads NKSTISDVPFGKPEVRK. A helical membrane pass occupies residues 145–167; the sequence is WLVLRGCTGFFGVFGMYYSLMYL. The Cytoplasmic portion of the chain corresponds to 168–171; it reads TISD. Residues 172 to 191 traverse the membrane as a helical segment; the sequence is AVLITFLAPSLTIFLSWVIL. The Lumenal segment spans residues 192-199; that stretch reads RERFTKVE. A helical membrane pass occupies residues 200 to 220; that stretch reads ALGSLISLLGVVLIVRPSFLF. At 221-241 the chain is on the cytoplasmic side; that stretch reads GTPELTDSSSQIVESSDPKSR. The helical transmembrane segment at 242–262 threads the bilayer; the sequence is LIATLVGLWGVLGMSCVYIII. The EamA 2 domain occupies 253–379; the sequence is LGMSCVYIII…IISATLWVIR (127 aa). Topologically, residues 263-269 are lumenal; that stretch reads RYIGKRA. The helical transmembrane segment at 270–290 threads the bilayer; that stretch reads HAIMSVSYFSLITAIVSFIGI. Over 291–307 the chain is Cytoplasmic; it reads NTIPSMKFQIPHSKKQW. A helical transmembrane segment spans residues 308 to 328; sequence ILFGNLGVSGFIFQLLLTMGI. Topologically, residues 329 to 357 are lumenal; that stretch reads QRERAGRGSLMTYTQLLYAVFWDVALYKH. Residues 358–378 traverse the membrane as a helical segment; that stretch reads WPNIWSWIGMIIIISATLWVI. At 379–414 the chain is on the cytoplasmic side; the sequence is RIRAANNETTAKDLTPIIDDEENSIPLTEFDLSDSK.

This sequence to yeast YPL264c.

The protein resides in the membrane. This is an uncharacterized protein from Saccharomyces cerevisiae (strain ATCC 204508 / S288c) (Baker's yeast).